A 166-amino-acid chain; its full sequence is Cytochrome c-type biogenesis protein CcmE (166 aa).

Residues 1–13 (MNFLPKSRKARRR) lie on the Cytoplasmic side of the membrane. Residues 14–34 (LTILAVAAPVVALAVGLALWG) form a helical; Signal-anchor for type II membrane protein membrane-spanning segment. At 35–166 (MRDAISLFYT…QGYKPGKPNT (132 aa)) the chain is on the periplasmic side. Heme contacts are provided by His128 and Tyr132. The interval 143–166 (EQGEWRGDGQAPSYQGYKPGKPNT) is disordered.

Belongs to the CcmE/CycJ family.

It is found in the cell inner membrane. In terms of biological role, heme chaperone required for the biogenesis of c-type cytochromes. Transiently binds heme delivered by CcmC and transfers the heme to apo-cytochromes in a process facilitated by CcmF and CcmH. In Caulobacter sp. (strain K31), this protein is Cytochrome c-type biogenesis protein CcmE.